The sequence spans 99 residues: MWGVVDDSAEEPWHELWGLFRPDGDVSWQHKALCAQTDPEAFFPEKGGSTRDAKRVCAKCEVREQCLKWAIDHDERFGIWGGMSERERRRYKREHRERA.

Residues 33-90 (LCAQTDPEAFFPEKGGSTRDAKRVCAKCEVREQCLKWAIDHDERFGIWGGMSERERRR) enclose the 4Fe-4S Wbl-type domain. [4Fe-4S] cluster is bound by residues Cys-34, Cys-57, Cys-60, and Cys-66.

It belongs to the WhiB family. It depends on [4Fe-4S] cluster as a cofactor. In terms of processing, the Fe-S cluster can be nitrosylated by nitric oxide (NO). Upon Fe-S cluster removal intramolecular disulfide bonds are formed.

Its subcellular location is the cytoplasm. In terms of biological role, acts as a transcriptional regulator. Probably redox-responsive. The apo- but not holo-form probably binds DNA. The chain is Transcriptional regulator WhiB2 (whiB2) from Bifidobacterium longum (strain NCC 2705).